We begin with the raw amino-acid sequence, 61 residues long: Alpha-conotoxin EIIA (61 aa).

The N-terminal stretch at 1–16 (MFIVFLLVVLATTVGS) is a signal peptide. Positions 17 to 40 (FTLDRVLEGRNAAAIDNALDQRDP) are excised as a propeptide. Q43 carries the post-translational modification Pyrrolidone carboxylic acid. A Hydroxyproline modification is found at P45. 2 disulfides stabilise this stretch: C47–C53 and C48–C58. The residue at position 58 (C58) is a Cysteine amide.

Belongs to the conotoxin A superfamily. As to expression, expressed by the venom duct.

It is found in the secreted. Alpha-conotoxins bind to the nicotinic acetylcholine receptors (nAChR) and inhibit them. This peptide potently blocks muscular nicotinic acetylcholine receptor (CHRNA1-CHRNB1-CHRNG-CHRND), and has no effect on neuronal receptors. It is able to totally displace [125I]-Bgtx from the Torpedo receptor with a complete inhibition in the high micromolar range. It produces a biphasic inhibition curve which fits nicely with a two-site model (Ki of 0.46 and 105 nM). This Conus ermineus (Agate cone) protein is Alpha-conotoxin EIIA.